A 691-amino-acid polypeptide reads, in one-letter code: Elongation factor G (691 aa).

One can recognise a tr-type G domain in the interval 8–282 (ERVRNIGIAA…AVVNYLPAPV (275 aa)). Residues 17–24 (AHIDAGKT), 81–85 (DTPGH), and 135–138 (NKMD) each bind GTP.

This sequence belongs to the TRAFAC class translation factor GTPase superfamily. Classic translation factor GTPase family. EF-G/EF-2 subfamily.

The protein localises to the cytoplasm. Functionally, catalyzes the GTP-dependent ribosomal translocation step during translation elongation. During this step, the ribosome changes from the pre-translocational (PRE) to the post-translocational (POST) state as the newly formed A-site-bound peptidyl-tRNA and P-site-bound deacylated tRNA move to the P and E sites, respectively. Catalyzes the coordinated movement of the two tRNA molecules, the mRNA and conformational changes in the ribosome. The chain is Elongation factor G from Prochlorococcus marinus (strain NATL2A).